We begin with the raw amino-acid sequence, 200 residues long: Nucleoside triphosphate pyrophosphatase (200 aa).

Asp-75 functions as the Proton acceptor in the catalytic mechanism.

This sequence belongs to the Maf family. A divalent metal cation is required as a cofactor.

Its subcellular location is the cytoplasm. It carries out the reaction a ribonucleoside 5'-triphosphate + H2O = a ribonucleoside 5'-phosphate + diphosphate + H(+). It catalyses the reaction a 2'-deoxyribonucleoside 5'-triphosphate + H2O = a 2'-deoxyribonucleoside 5'-phosphate + diphosphate + H(+). Functionally, nucleoside triphosphate pyrophosphatase. May have a dual role in cell division arrest and in preventing the incorporation of modified nucleotides into cellular nucleic acids. The chain is Nucleoside triphosphate pyrophosphatase from Synechococcus sp. (strain CC9311).